The chain runs to 706 residues: uncharacterized protein (706 aa).

Coiled-coil stretches lie at residues 86 to 162, 269 to 299, and 337 to 427; these read TKNV…AKKI, DYLK…VNEL, and DDYI…QSDY.

This is an uncharacterized protein from Staphylococcus aureus (strain MRSA252).